A 427-amino-acid polypeptide reads, in one-letter code: MTILFLFLLLFLLMFIGVPIAVSLGLSGALTILLFSPDSVRSLAIKLFETSEHYTLLAIPFFLLSGAFMTTGGVARRLIDFANACVGHIRGGLAIAAVLACMLFAALSGSSPATVAAVGSIAIAGMVRSGYPQAFGAGIVCNAGTLGILIPPSIVMVVYAAATETSVGKLFIAGVVPGLLLGLILMVVIYIVARVKKLPAMPRVSLREWLASARKALWGLLLMVIILGGIYSGAFTPTEAAAVAAVYSAFVALFVYRDMRLSECPKVLLESGKLTIMLMFIIANAMLFAHVLTTEQIPQSIASWVTELGLSPWMFLLVVNIVLLIAGNFMEPSAIILILAPIFFPIAMELGIDPIHLGIIMVVNMEIGLITPPVGLNLFVTSAVTGMPLGATIRAALPWLMILLVFLIIVTYIPAVSLALPNWLGMS.

The next 13 helical transmembrane spans lie at Thr-2–Val-22, Thr-55–Ala-75, Gly-91–Ser-111, Val-115–Phe-135, Gly-138–Val-158, Phe-171–Ile-191, Ala-216–Thr-236, Pro-237–Arg-257, Leu-274–Thr-294, Leu-310–Met-330, Ile-335–Ile-355, Ile-359–Phe-379, and Ala-396–Val-416.

It belongs to the TRAP transporter large permease family. The complex comprises the extracytoplasmic solute receptor protein DctP, and the two transmembrane proteins DctQ and DctM.

The protein localises to the cell inner membrane. In terms of biological role, part of the tripartite ATP-independent periplasmic (TRAP) transport system DctPQM involved in C4-dicarboxylates uptake. This chain is C4-dicarboxylate TRAP transporter large permease protein DctM, found in Pseudomonas aeruginosa (strain ATCC 15692 / DSM 22644 / CIP 104116 / JCM 14847 / LMG 12228 / 1C / PRS 101 / PAO1).